A 748-amino-acid chain; its full sequence is Far upstream element-binding protein 2 (748 aa).

Positions 1 to 78 (MSDYNTGGPP…GIRKDAFADA (78 aa)) are disordered. Position 2 is an N-acetylserine (Ser2). A compositionally biased stretch (pro residues) spans 8 to 17 (GPPPGPPPPA). Composition is skewed to gly residues over residues 18 to 28 (GGGGGAAGAGG) and 36 to 69 (GAGD…GGPG). Omega-N-methylarginine is present on Arg40. At Lys88 the chain carries N6-acetyllysine. The disordered stretch occupies residues 90-148 (GGDAATTVNNNTPDFGFGGQKRQLEDGDQPDSKKLASQGDSIGSQLGPIHPPPRTSMTE). Residue Thr101 is modified to Phosphothreonine. Residues 111–123 (RQLEDGDQPDSKK) are compositionally biased toward basic and acidic residues. A Glycyl lysine isopeptide (Lys-Gly) (interchain with G-Cter in SUMO1); alternate cross-link involves residue Lys122. Lys122 participates in a covalent cross-link: Glycyl lysine isopeptide (Lys-Gly) (interchain with G-Cter in SUMO2); alternate. Residues Ser126, Ser130, Ser182, Ser185, Ser194, and Ser275 each carry the phosphoserine modification. KH domains are found at residues 145–209 (SMTE…KMML), 234–300 (GTVQ…CEMV), and 323–387 (GGGI…ARII). The disordered stretch occupies residues 394–422 (LRSGPPGPPGAPGMPPGGRGRGRGQGNWG). Pro residues predominate over residues 398–408 (PPGPPGAPGMP). The span at 409 to 422 (PGGRGRGRGQGNWG) shows a compositional bias: gly residues. 4 positions are modified to omega-N-methylarginine: Arg412, Arg414, Arg416, and Arg443. A KH 4 domain is found at 425 to 492 (GGEMTFSIPT…QQIDHAKQLI (68 aa)). A Phosphoserine modification is found at Ser481. The segment at 498-570 (GPLCPVGPGP…HDPNKAAAAA (73 aa)) is disordered. Pro residues-rich tracts occupy residues 502–521 (PVGP…PFNP) and 529–543 (PGAP…PHQY). Repeat 1 spans residues 572–583 (DPNAAWAAYYSH). Residues 572–685 (DPNAAWAAYY…SAAWAEYYRQ (114 aa)) form a 4 X 12 AA imperfect repeats region. Residues 588–614 (PPGPVPGPAPAPAAPPAQGEPPQPPPT) show a composition bias toward pro residues. Disordered regions lie at residues 588–650 (PPGP…KAWE), 659–678 (VATG…YSAA), and 689–735 (YYGQ…PALV). Repeat copies occupy residues 618-629 (DYTKAWEEYYKK), 644-655 (DYTKAWEEYYKK), and 674-685 (DYSAAWAEYYRQ).

Belongs to the KHSRP family. As to quaternary structure, part of a ternary complex containing FUBP2, PTBP1, PTBP2 and HNRPH1. Interacts with PARN. Interacts with PQBP1.

It is found in the nucleus. The protein localises to the cytoplasm. Functionally, binds to the dendritic targeting element and may play a role in mRNA trafficking. Part of a ternary complex that binds to the downstream control sequence (DCS) of the pre-mRNA. Mediates exon inclusion in transcripts that are subject to tissue-specific alternative splicing. May interact with single-stranded DNA from the far-upstream element (FUSE). May activate gene expression. Also involved in degradation of inherently unstable mRNAs that contain AU-rich elements (AREs) in their 3'-UTR, possibly by recruiting degradation machinery to ARE-containing mRNAs. The sequence is that of Far upstream element-binding protein 2 (Khsrp) from Mus musculus (Mouse).